The primary structure comprises 161 residues: Cyclic pyranopterin monophosphate synthase (161 aa).

Substrate is bound by residues 78–80 and 116–117; these read MCH and ME. The active site involves D131.

It belongs to the MoaC family. In terms of assembly, homohexamer; trimer of dimers.

The enzyme catalyses (8S)-3',8-cyclo-7,8-dihydroguanosine 5'-triphosphate = cyclic pyranopterin phosphate + diphosphate. Its pathway is cofactor biosynthesis; molybdopterin biosynthesis. Its function is as follows. Catalyzes the conversion of (8S)-3',8-cyclo-7,8-dihydroguanosine 5'-triphosphate to cyclic pyranopterin monophosphate (cPMP). This Nitratidesulfovibrio vulgaris (strain ATCC 29579 / DSM 644 / CCUG 34227 / NCIMB 8303 / VKM B-1760 / Hildenborough) (Desulfovibrio vulgaris) protein is Cyclic pyranopterin monophosphate synthase.